Reading from the N-terminus, the 463-residue chain is Fumarate hydratase class II (463 aa).

Residues 98-100, 129-132, 139-141, and Thr-187 contribute to the substrate site; these read SGT, HPND, and SSN. Catalysis depends on His-188, which acts as the Proton donor/acceptor. Ser-318 is a catalytic residue. Residues Ser-319 and 324–326 contribute to the substrate site; that span reads KVN.

The protein belongs to the class-II fumarase/aspartase family. Fumarase subfamily. In terms of assembly, homotetramer.

The protein resides in the cytoplasm. It catalyses the reaction (S)-malate = fumarate + H2O. Its pathway is carbohydrate metabolism; tricarboxylic acid cycle; (S)-malate from fumarate: step 1/1. In terms of biological role, involved in the TCA cycle. Catalyzes the stereospecific interconversion of fumarate to L-malate. The chain is Fumarate hydratase class II from Caulobacter vibrioides (strain ATCC 19089 / CIP 103742 / CB 15) (Caulobacter crescentus).